We begin with the raw amino-acid sequence, 142 residues long: Matrix protein (142 aa).

Residues 64–66 and A117 contribute to the GMP site; that span reads DVE.

Homooligomer. Homotetramer. Interacts with phosphoprotein P. Binds to ssRNA. Not glycosylated.

It localises to the virion. The protein resides in the host cytoplasm. The protein localises to the host cell membrane. Functionally, plays a crucial role in virion assembly and budding. This is Matrix protein (M) from Bos taurus (Bovine).